Reading from the N-terminus, the 331-residue chain is D-alanine--D-alanine ligase (331 aa).

The ATP-grasp domain maps to 116 to 316 (KRLWQTHSLP…YEDFVLQLAA (201 aa)). An ATP-binding site is contributed by 142–197 (ADRLGLPLIVKPAREGSSIGLTKVTSVAELPAAYEKAARLDRDVMAEQFIDGDELT). Mg(2+)-binding residues include aspartate 269, glutamate 283, and asparagine 285.

It belongs to the D-alanine--D-alanine ligase family. Mg(2+) serves as cofactor. Requires Mn(2+) as cofactor.

It localises to the cytoplasm. The enzyme catalyses 2 D-alanine + ATP = D-alanyl-D-alanine + ADP + phosphate + H(+). It functions in the pathway cell wall biogenesis; peptidoglycan biosynthesis. Its function is as follows. Cell wall formation. The sequence is that of D-alanine--D-alanine ligase from Ralstonia nicotianae (strain ATCC BAA-1114 / GMI1000) (Ralstonia solanacearum).